The following is a 131-amino-acid chain: MMTDPIADMLTRIRNAVNAKHKVVEVPASNIKKSIAQILLDEGFIDGFNVTEDGKQGIITIDLKYGPNEEKVISGIKRISKPGLRVYARANEVPKVLGGLGIAIVSTSKGLVTDKVARKEGIGGEVICYVW.

Belongs to the universal ribosomal protein uS8 family. As to quaternary structure, part of the 30S ribosomal subunit. Contacts proteins S5 and S12.

In terms of biological role, one of the primary rRNA binding proteins, it binds directly to 16S rRNA central domain where it helps coordinate assembly of the platform of the 30S subunit. The chain is Small ribosomal subunit protein uS8 from Finegoldia magna (strain ATCC 29328 / DSM 20472 / WAL 2508) (Peptostreptococcus magnus).